Reading from the N-terminus, the 341-residue chain is ATPase GET3 (341 aa).

Residue 34 to 41 (KGGVGKTT) participates in ATP binding. Residue Asp63 is part of the active site. The ATP site is built by Glu245 and Asn272. Zn(2+)-binding residues include Cys283 and Cys286.

Belongs to the arsA ATPase family. As to quaternary structure, homodimer.

It is found in the cytoplasm. The protein resides in the endoplasmic reticulum. In terms of biological role, ATPase required for the post-translational delivery of tail-anchored (TA) proteins to the endoplasmic reticulum. Recognizes and selectively binds the transmembrane domain of TA proteins in the cytosol. This complex then targets to the endoplasmic reticulum by membrane-bound receptors, where the tail-anchored protein is released for insertion. This process is regulated by ATP binding and hydrolysis. ATP binding drives the homodimer towards the closed dimer state, facilitating recognition of newly synthesized TA membrane proteins. ATP hydrolysis is required for insertion. Subsequently, the homodimer reverts towards the open dimer state, lowering its affinity for the membrane-bound receptor, and returning it to the cytosol to initiate a new round of targeting. The polypeptide is ATPase GET3 (Ajellomyces capsulatus (strain H143) (Darling's disease fungus)).